Here is a 123-residue protein sequence, read N- to C-terminus: Histone H2B (123 aa).

The disordered stretch occupies residues 1 to 30; it reads MPPKTSGKAAKKAGKAQKNITKTDKKKKRK. Position 2 is an N-methylproline; partial (P2). The residue at position 44 (K44) is an N6-succinyllysine. O-linked (GlcNAc) serine glycosylation occurs at S110. N6-succinyllysine occurs at positions 114 and 118. K118 participates in a covalent cross-link: Glycyl lysine isopeptide (Lys-Gly) (interchain with G-Cter in ubiquitin).

This sequence belongs to the histone H2B family. As to quaternary structure, the nucleosome is a histone octamer containing two molecules each of H2A, H2B, H3 and H4 assembled in one H3-H4 heterotetramer and two H2A-H2B heterodimers. The octamer wraps approximately 147 bp of DNA. In terms of processing, phosphorylated by the catalytic component of the Dbf4-dependent kinase (DDK) complex Cdc7. Monoubiquitination of Lys-118 by Bre1 gives a specific tag for epigenetic transcriptional activation and is also prerequisite for histone H3 'Lys-4' and 'Lys-79' methylation. Deubiquitination of Lys-118 by the SAGA complex is involved in activating transcription of a large subset of genes. Post-translationally, methylation at Pro-2 increases upon heat shock. In terms of processing, glcNAcylation at Ser-110 promotes monoubiquitination of Lys-118. It fluctuates in response to extracellular glucose, and associates with transcribed genes.

It localises to the nucleus. The protein localises to the chromosome. Core component of nucleosome. Nucleosomes wrap and compact DNA into chromatin, limiting DNA accessibility to the cellular machineries which require DNA as a template. Histones thereby play a central role in transcription regulation, DNA repair, DNA replication and chromosomal stability. DNA accessibility is regulated via a complex set of post-translational modifications of histones, also called histone code, and nucleosome remodeling. The chain is Histone H2B (His2B) from Drosophila erecta (Fruit fly).